The sequence spans 103 residues: Small ribosomal subunit protein uS17 (103 aa).

The tract at residues 78 to 103 is disordered; sequence SHSPKADKSAGSTAPAPEAAAKEVSE.

Belongs to the universal ribosomal protein uS17 family. Part of the 30S ribosomal subunit.

In terms of biological role, one of the primary rRNA binding proteins, it binds specifically to the 5'-end of 16S ribosomal RNA. The protein is Small ribosomal subunit protein uS17 of Parasynechococcus marenigrum (strain WH8102).